The following is a 511-amino-acid chain: Ribonuclease Y (511 aa).

A helical transmembrane segment spans residues 3–23; sequence VGILIGIIILGVVGFIQYTLI. One can recognise a KH domain in the interval 201–286; it reads TVHVVALPND…EMVERAIKDV (86 aa). The HD domain maps to 327–420; the sequence is VLKHSIEVSY…VQAADAISAA (94 aa).

Belongs to the RNase Y family.

Its subcellular location is the cell membrane. Endoribonuclease that initiates mRNA decay. The chain is Ribonuclease Y from Clostridium perfringens (strain SM101 / Type A).